Consider the following 310-residue polypeptide: Aspartate carbamoyltransferase catalytic subunit 2 (310 aa).

Arginine 55 and threonine 56 together coordinate carbamoyl phosphate. Lysine 85 lines the L-aspartate pocket. Arginine 106, histidine 134, and glutamine 137 together coordinate carbamoyl phosphate. Positions 167 and 228 each coordinate L-aspartate. Leucine 266 and proline 267 together coordinate carbamoyl phosphate.

This sequence belongs to the aspartate/ornithine carbamoyltransferase superfamily. ATCase family. In terms of assembly, heterododecamer (2C3:3R2) of six catalytic PyrB chains organized as two trimers (C3), and six regulatory PyrI chains organized as three dimers (R2).

The catalysed reaction is carbamoyl phosphate + L-aspartate = N-carbamoyl-L-aspartate + phosphate + H(+). It participates in pyrimidine metabolism; UMP biosynthesis via de novo pathway; (S)-dihydroorotate from bicarbonate: step 2/3. Functionally, catalyzes the condensation of carbamoyl phosphate and aspartate to form carbamoyl aspartate and inorganic phosphate, the committed step in the de novo pyrimidine nucleotide biosynthesis pathway. The polypeptide is Aspartate carbamoyltransferase catalytic subunit 2 (Shewanella halifaxensis (strain HAW-EB4)).